The sequence spans 272 residues: 3-methyl-2-oxobutanoate hydroxymethyltransferase (272 aa).

Residues aspartate 51 and aspartate 90 each coordinate Mg(2+). 3-methyl-2-oxobutanoate contacts are provided by residues 51–52 (DS), aspartate 90, and lysine 118. Glutamate 120 is a binding site for Mg(2+). The Proton acceptor role is filled by glutamate 187.

Belongs to the PanB family. In terms of assembly, homodecamer; pentamer of dimers. Mg(2+) serves as cofactor.

It is found in the cytoplasm. The enzyme catalyses 3-methyl-2-oxobutanoate + (6R)-5,10-methylene-5,6,7,8-tetrahydrofolate + H2O = 2-dehydropantoate + (6S)-5,6,7,8-tetrahydrofolate. It participates in cofactor biosynthesis; (R)-pantothenate biosynthesis; (R)-pantoate from 3-methyl-2-oxobutanoate: step 1/2. Catalyzes the reversible reaction in which hydroxymethyl group from 5,10-methylenetetrahydrofolate is transferred onto alpha-ketoisovalerate to form ketopantoate. In Xylella fastidiosa (strain M12), this protein is 3-methyl-2-oxobutanoate hydroxymethyltransferase.